We begin with the raw amino-acid sequence, 268 residues long: Imidazole glycerol phosphate synthase subunit HisF (268 aa).

Catalysis depends on residues D12 and D131.

Belongs to the HisA/HisF family. As to quaternary structure, heterodimer of HisH and HisF.

The protein localises to the cytoplasm. The catalysed reaction is 5-[(5-phospho-1-deoxy-D-ribulos-1-ylimino)methylamino]-1-(5-phospho-beta-D-ribosyl)imidazole-4-carboxamide + L-glutamine = D-erythro-1-(imidazol-4-yl)glycerol 3-phosphate + 5-amino-1-(5-phospho-beta-D-ribosyl)imidazole-4-carboxamide + L-glutamate + H(+). It functions in the pathway amino-acid biosynthesis; L-histidine biosynthesis; L-histidine from 5-phospho-alpha-D-ribose 1-diphosphate: step 5/9. Its function is as follows. IGPS catalyzes the conversion of PRFAR and glutamine to IGP, AICAR and glutamate. The HisF subunit catalyzes the cyclization activity that produces IGP and AICAR from PRFAR using the ammonia provided by the HisH subunit. This chain is Imidazole glycerol phosphate synthase subunit HisF, found in Methanosphaerula palustris (strain ATCC BAA-1556 / DSM 19958 / E1-9c).